A 301-amino-acid chain; its full sequence is uncharacterized protein (301 aa).

This sequence belongs to the asfivirus E301R family. In terms of assembly, interacts with host IRF3.

In terms of biological role, plays a role in the inhibition of host innate immune system by acting as a negatively regulator of type I interferon production. Mechanistically, interacts with and prevents host IRF3 nuclear localization to inhibit its transcriptional activity. This is an uncharacterized protein from African swine fever virus (isolate Tick/South Africa/Pretoriuskop Pr4/1996) (ASFV).